Reading from the N-terminus, the 213-residue chain is Uridine kinase (213 aa).

14–21 provides a ligand contact to ATP; the sequence is GASASGKS.

This sequence belongs to the uridine kinase family.

It is found in the cytoplasm. The enzyme catalyses uridine + ATP = UMP + ADP + H(+). It catalyses the reaction cytidine + ATP = CMP + ADP + H(+). Its pathway is pyrimidine metabolism; CTP biosynthesis via salvage pathway; CTP from cytidine: step 1/3. It functions in the pathway pyrimidine metabolism; UMP biosynthesis via salvage pathway; UMP from uridine: step 1/1. In Vibrio cholerae serotype O1 (strain ATCC 39315 / El Tor Inaba N16961), this protein is Uridine kinase.